A 247-amino-acid polypeptide reads, in one-letter code: Diglucosylglycerate octanoyltransferase (247 aa).

The protein belongs to the OctT acyltransferase family. As to quaternary structure, homotetramer.

It carries out the reaction (2R)-2-O-[alpha-D-glucopyranosyl-(1-&gt;6)-alpha-D-glucopyranosyl]-glycerate + octanoyl-CoA = (2R)-2-O-[6-O-octanoyl-alpha-D-glucopyranosyl-(1-&gt;6)-alpha-D-glucopyranosyl]-glycerate + CoA. Functionally, sugar octanoyltransferase likely involved in the biosynthesis of mycobacterial methylglucose lipopolysaccharide (MGLP). Catalyzes the transfer of an octanoyl group from octanoyl-CoA to the C6 OH of the second glucose in diglucosylglycerate (DGG). DGG is the preferred acceptor, but to a lesser extent, GG (glucosylglycerate) can also be used as substrate. DGG and GG are the two earliest intermediates in MGLP biosynthesis. This chain is Diglucosylglycerate octanoyltransferase, found in Mycobacterium tuberculosis (strain ATCC 25618 / H37Rv).